Reading from the N-terminus, the 174-residue chain is Large ribosomal subunit protein uL15 (174 aa).

2 disordered regions span residues 1–57 (MKLH…QMRI) and 147–174 (PWVV…PQKA). Residues 21–35 (RGIGSGKGKTGGKGM) show a composition bias toward gly residues.

Belongs to the universal ribosomal protein uL15 family. In terms of assembly, part of the 50S ribosomal subunit.

Its function is as follows. Binds to the 23S rRNA. This is Large ribosomal subunit protein uL15 from Roseiflexus sp. (strain RS-1).